We begin with the raw amino-acid sequence, 544 residues long: Involucrin (544 aa).

The tract at residues Met1–Leu520 is disordered. The segment covering Glu76–His90 has biased composition (low complexity). 9 stretches are compositionally biased toward basic and acidic residues: residues Glu96–Gln117, Glu124–Leu152, Gln202–Glu234, Gln252–Gly271, Lys283–Gln297, Gln304–Gln347, Gln354–Gln411, Lys423–Gln437, and Lys462–Gln476. Over residues Gln477–Leu494 the composition is skewed to low complexity.

The protein belongs to the involucrin family. As to quaternary structure, directly or indirectly cross-linked to cornifelin (CNFN). In terms of processing, substrate of transglutaminase. Specific glutamines or lysines are cross-linked to keratins, desmoplakin and to inter involucrin molecules. As to expression, keratinocytes of epidermis and other stratified squamous epithelia.

The protein localises to the cytoplasm. Its function is as follows. Part of the insoluble cornified cell envelope (CE) of stratified squamous epithelia. This is Involucrin (IVL) from Aotus trivirgatus (Three-striped night monkey).